The primary structure comprises 343 residues: ATPase GET3 (343 aa).

32–39 (KGGVGKTT) contacts ATP. Residue Asp-61 is part of the active site. The ATP site is built by Glu-245 and Asn-272. Positions 283 and 286 each coordinate Zn(2+).

Belongs to the arsA ATPase family. Homodimer.

The protein localises to the cytoplasm. The protein resides in the endoplasmic reticulum. Functionally, ATPase required for the post-translational delivery of tail-anchored (TA) proteins to the endoplasmic reticulum. Recognizes and selectively binds the transmembrane domain of TA proteins in the cytosol. This complex then targets to the endoplasmic reticulum by membrane-bound receptors, where the tail-anchored protein is released for insertion. This process is regulated by ATP binding and hydrolysis. ATP binding drives the homodimer towards the closed dimer state, facilitating recognition of newly synthesized TA membrane proteins. ATP hydrolysis is required for insertion. Subsequently, the homodimer reverts towards the open dimer state, lowering its affinity for the membrane-bound receptor, and returning it to the cytosol to initiate a new round of targeting. This Pyricularia oryzae (strain 70-15 / ATCC MYA-4617 / FGSC 8958) (Rice blast fungus) protein is ATPase GET3.